The chain runs to 139 residues: Class I hydrophobin 1 (139 aa).

The first 21 residues, 1-21 (MFFRISTVFVVALAAFAAASP), serve as a signal peptide directing secretion. Intrachain disulfides connect cysteine 57/cysteine 118, cysteine 64/cysteine 112, cysteine 65/cysteine 98, and cysteine 119/cysteine 132.

This sequence belongs to the fungal hydrophobin family. In terms of assembly, self-assembles to form functional amyloid fibrils called rodlets. Self-assembly into fibrillar rodlets occurs spontaneously at hydrophobic:hydrophilic interfaces and the rodlets further associate laterally to form amphipathic monolayers.

The protein resides in the secreted. The protein localises to the cell wall. Functionally, aerial growth, conidiation, and dispersal of filamentous fungi in the environment rely upon a capability of their secreting small amphipathic proteins called hydrophobins (HPBs) with low sequence identity. Class I can self-assemble into an outermost layer of rodlet bundles on aerial cell surfaces, conferring cellular hydrophobicity that supports fungal growth, development and dispersal; whereas Class II form highly ordered films at water-air interfaces through intermolecular interactions but contribute nothing to the rodlet structure. Hah1 is a class I hydrophobin that is involved in aerial growth of mycelia, but does not play a role in pathogenesis. The polypeptide is Class I hydrophobin 1 (Heterobasidion annosum (Root rot fungus)).